A 287-amino-acid chain; its full sequence is ATP synthase gamma chain (287 aa).

This sequence belongs to the ATPase gamma chain family. In terms of assembly, F-type ATPases have 2 components, CF(1) - the catalytic core - and CF(0) - the membrane proton channel. CF(1) has five subunits: alpha(3), beta(3), gamma(1), delta(1), epsilon(1). CF(0) has three main subunits: a, b and c.

The protein resides in the cell inner membrane. Produces ATP from ADP in the presence of a proton gradient across the membrane. The gamma chain is believed to be important in regulating ATPase activity and the flow of protons through the CF(0) complex. The chain is ATP synthase gamma chain from Colwellia maris.